We begin with the raw amino-acid sequence, 495 residues long: Beta-galactoside alpha-2,6-sialyltransferase 2 (495 aa).

At 1-10 (MKPHLKQWRQ) the chain is on the cytoplasmic side. Residues 11-31 (GMLCGVFAWGLFFVVIFLYFT) form a helical; Signal-anchor for type II membrane protein membrane-spanning segment. The Lumenal segment spans residues 32-495 (DSSPAKPAPS…LQAVRCPPGA (464 aa)). Disordered stretches follow at residues 63–90 (GASE…LRTW) and 107–165 (GRTS…EDGE). Low complexity predominate over residues 134–143 (PEGARPPRAA). Residues 144–153 (PGRRAKRGPR) show a composition bias toward basic residues. Cystine bridges form between C225–C491, C268–C420, and C438–C449. N279 and N309 each carry an N-linked (GlcNAc...) asparagine glycan.

Belongs to the glycosyltransferase 29 family.

It is found in the golgi apparatus. Its subcellular location is the golgi stack membrane. The enzyme catalyses a beta-D-galactoside + CMP-N-acetyl-beta-neuraminate = an N-acetyl-alpha-neuraminyl-(2-&gt;6)-beta-D-galactosyl derivative + CMP + H(+). Functionally, transfers sialic acid from the donor of substrate CMP-sialic acid to galactose containing acceptor substrates. Has alpha-2,6-sialyltransferase activity toward oligosaccharides that have the Gal-beta-1,4-GlcNAc sequence at the non-reducing end of their carbohydrate groups, but it has weak or no activities toward glycoproteins and glycolipids. This Bos taurus (Bovine) protein is Beta-galactoside alpha-2,6-sialyltransferase 2 (ST6GAL2).